The sequence spans 926 residues: Alanine--tRNA ligase (926 aa).

Zn(2+) is bound by residues H615, H619, C719, and H723. A disordered region spans residues 887–910; sequence RVGGGGGGPPDFAQGGGPDADALD. The span at 888 to 904 shows a compositional bias: gly residues; that stretch reads VGGGGGGPPDFAQGGGP.

It belongs to the class-II aminoacyl-tRNA synthetase family. The cofactor is Zn(2+).

The protein localises to the cytoplasm. The enzyme catalyses tRNA(Ala) + L-alanine + ATP = L-alanyl-tRNA(Ala) + AMP + diphosphate. Its function is as follows. Catalyzes the attachment of alanine to tRNA(Ala) in a two-step reaction: alanine is first activated by ATP to form Ala-AMP and then transferred to the acceptor end of tRNA(Ala). Also edits incorrectly charged Ser-tRNA(Ala) and Gly-tRNA(Ala) via its editing domain. This is Alanine--tRNA ligase from Halorubrum lacusprofundi (strain ATCC 49239 / DSM 5036 / JCM 8891 / ACAM 34).